The chain runs to 322 residues: Packaging protein 3 (322 aa).

The disordered stretch occupies residues 1-24 (MHPILKNIRSQPDQGRAEEHNPEL). Residues 1–127 (MHPILKNIRS…RDVERWQHDT (127 aa)) are interaction with packaging protein 1.

It belongs to the adenoviridae packaging protein 3 family. In terms of assembly, part of the genome packaging complex composed of packaging proteins 1, 2 and 3; this complex specifically binds to the packaging sequence on the left end of viral genomic DNA and performs packaging of the viral genome. Interacts with hexon-linking protein IIIa; this interaction is required to promote correct genome packaging. Cleaved at different sites by the viral protease during virion maturation.

The protein localises to the host nucleus. Involved in viral genome packaging through its interaction with packaging proteins 1 and 2. After proteolytic cleavage by adenovirus protease, L1 52/55k protein is removed from the capsid during viral maturation. The chain is Packaging protein 3 from Pantherophis guttatus (Corn snake).